A 267-amino-acid chain; its full sequence is Cysteine protease avirulence protein AvrPphB (267 aa).

A lipid anchor (N-myristoyl glycine; by host) is attached at Gly63. Residues Cys98, His212, and Asp227 contribute to the active site.

The protein belongs to the peptidase C58 family. In infected plant cells, the 28 kDa product interacts with PBS1. Post-translationally, autocleaved. This function is essential for myristoylation in infected plant cell and for eliciting the plant hypersensitive response. Myristoylation of 28 kDa product in infected plant cells; it mediates the localization to membranes.

The protein resides in the secreted. It is found in the host membrane. Its function is as follows. Cysteine protease avirulence protein, which is essential during infection of plant cells from cultivar-specific of beans and Arabidopsis thaliana. The autocleavage of the protein is required for virulence function. May act by affecting the plant defense system. In plants lacking R3 or RPS5 resistance genes, it probably impairs the plant defense system and leads to the bacteria multiplication. In contrast, in plants containing the R3 or RPS5 protein, it is unable to induce disease symptoms, explaining its avirulence name. The 7 kDa product is required for the type-III translocation from Pseudomonas strains to the plant, but are partially dispensable for effector recognition following in planta expression. In infected plants, it acts by cleaving the PBS1 protein, which leads to resistance or disease, depending on the presence or absence of RPS5, respectively. Targets the Arabidopsis kinases PBS1, BIK1, PBL1, PBL2, PBL3, PBL5, PBL7, PBL9 and PBL11 for cleavage in vitro. Can block recognition of AvrB avirulence factor by plant cells by cleaving Arabidopsis RIPK kinase and suppressing Arabidopsis RPM1 activation. Cannot block AvrRpm1-induced activation of RPM1. In Pseudomonas savastanoi pv. phaseolicola (Pseudomonas syringae pv. phaseolicola), this protein is Cysteine protease avirulence protein AvrPphB (avrPph3).